Here is a 244-residue protein sequence, read N- to C-terminus: Venom nerve growth factor 2 (244 aa).

Positions M1–A18 are cleaved as a signal peptide. The propeptide occupies A19–R125. Residues G47–D66 show a composition bias toward basic and acidic residues. Positions G47–L69 are disordered. 2 cysteine pairs are disulfide-bonded: C139–C205 and C181–C233.

This sequence belongs to the NGF-beta family. In terms of assembly, homodimer; non-covalently linked. In terms of tissue distribution, expressed by the venom gland.

The protein resides in the secreted. In terms of biological role, nerve growth factor is important for the development and maintenance of the sympathetic and sensory nervous systems. It stimulates division and differentiation of sympathetic and embryonic sensory neurons as well as basal forebrain cholinergic neurons in the brain. Its relevance in the snake venom is not clear. However, it has been shown to inhibit metalloproteinase-dependent proteolysis of platelet glycoprotein Ib alpha, suggesting a metalloproteinase inhibition to prevent metalloprotease autodigestion and/or protection against prey proteases. Binds a lipid between the two protein chains in the homodimer. The lipid-bound form promotes histamine relase from mouse mast cells, contrary to the lipid-free form. The protein is Venom nerve growth factor 2 of Notechis scutatus scutatus (Mainland tiger snake).